Reading from the N-terminus, the 292-residue chain is 4-hydroxy-tetrahydrodipicolinate synthase (292 aa).

Residue threonine 44 coordinates pyruvate. The active-site Proton donor/acceptor is the tyrosine 132. Lysine 161 acts as the Schiff-base intermediate with substrate in catalysis. Isoleucine 203 is a pyruvate binding site.

The protein belongs to the DapA family. In terms of assembly, homotetramer; dimer of dimers.

Its subcellular location is the cytoplasm. The catalysed reaction is L-aspartate 4-semialdehyde + pyruvate = (2S,4S)-4-hydroxy-2,3,4,5-tetrahydrodipicolinate + H2O + H(+). Its pathway is amino-acid biosynthesis; L-lysine biosynthesis via DAP pathway; (S)-tetrahydrodipicolinate from L-aspartate: step 3/4. Catalyzes the condensation of (S)-aspartate-beta-semialdehyde [(S)-ASA] and pyruvate to 4-hydroxy-tetrahydrodipicolinate (HTPA). The protein is 4-hydroxy-tetrahydrodipicolinate synthase of Fervidobacterium nodosum (strain ATCC 35602 / DSM 5306 / Rt17-B1).